A 439-amino-acid polypeptide reads, in one-letter code: Chaperone SurA (439 aa).

Residues 1–27 (MRRISSRLSLVLFAALSCATALFPAHA) form the signal peptide. PpiC domains follow at residues 180–281 (GEEF…KLLD) and 293–391 (LEQT…QVEA).

The protein resides in the periplasm. It carries out the reaction [protein]-peptidylproline (omega=180) = [protein]-peptidylproline (omega=0). Chaperone involved in the correct folding and assembly of outer membrane proteins. Recognizes specific patterns of aromatic residues and the orientation of their side chains, which are found more frequently in integral outer membrane proteins. May act in both early periplasmic and late outer membrane-associated steps of protein maturation. This is Chaperone SurA from Aromatoleum aromaticum (strain DSM 19018 / LMG 30748 / EbN1) (Azoarcus sp. (strain EbN1)).